We begin with the raw amino-acid sequence, 298 residues long: Ribosomal protein L11 methyltransferase (298 aa).

S-adenosyl-L-methionine is bound by residues T152, G176, D198, and N236.

Belongs to the methyltransferase superfamily. PrmA family.

The protein resides in the cytoplasm. The catalysed reaction is L-lysyl-[protein] + 3 S-adenosyl-L-methionine = N(6),N(6),N(6)-trimethyl-L-lysyl-[protein] + 3 S-adenosyl-L-homocysteine + 3 H(+). Functionally, methylates ribosomal protein L11. This is Ribosomal protein L11 methyltransferase from Polaromonas sp. (strain JS666 / ATCC BAA-500).